Here is a 179-residue protein sequence, read N- to C-terminus: Cytochrome b6-f complex iron-sulfur subunit (179 aa).

The chain crosses the membrane as a helical span at residues 21–43 (LLTFGSVTGVALGALYPVVNYFI). One can recognise a Rieske domain in the interval 61 to 162 (GNDVVLSKFL…VSVTDDKVFL (102 aa)). [2Fe-2S] cluster is bound by residues Cys108, His110, Cys126, and His129. Cys113 and Cys128 are joined by a disulfide.

The protein belongs to the Rieske iron-sulfur protein family. The 4 large subunits of the cytochrome b6-f complex are cytochrome b6, subunit IV (17 kDa polypeptide, PetD), cytochrome f and the Rieske protein, while the 4 small subunits are PetG, PetL, PetM and PetN. The complex functions as a dimer. [2Fe-2S] cluster serves as cofactor.

The protein resides in the cellular thylakoid membrane. It carries out the reaction 2 oxidized [plastocyanin] + a plastoquinol + 2 H(+)(in) = 2 reduced [plastocyanin] + a plastoquinone + 4 H(+)(out). Component of the cytochrome b6-f complex, which mediates electron transfer between photosystem II (PSII) and photosystem I (PSI), cyclic electron flow around PSI, and state transitions. The protein is Cytochrome b6-f complex iron-sulfur subunit of Synechococcus elongatus (strain ATCC 33912 / PCC 7942 / FACHB-805) (Anacystis nidulans R2).